The following is a 164-amino-acid chain: Neurotrophin-3 (164 aa).

The N-terminal stretch at 1–3 is a signal peptide; sequence IQS. The propeptide occupies 4 to 118; it reads TSMDQGBLSE…GLNRTSRRKR (115 aa). Positions 89–126 are disordered; that stretch reads LLSENTPLEPPPLYLTEEPMGLNRTSRRKRFAEGKSHR. Residue asparagine 111 is glycosylated (N-linked (GlcNAc...) asparagine).

It belongs to the NGF-beta family.

It is found in the secreted. Seems to promote the survival of visceral and proprioceptive sensory neurons. The sequence is that of Neurotrophin-3 (NTF3) from Cylindrophis ruffus (Red-tailed pipe snake).